Consider the following 101-residue polypeptide: Integration host factor subunit beta (101 aa).

The segment at 58-101 (ARAGRNPRTGAHVPVDQKSVPFFKTGKEMRERLNRDTGAPDSGA) is disordered. Basic and acidic residues predominate over residues 82–92 (TGKEMRERLNR).

It belongs to the bacterial histone-like protein family. Heterodimer of an alpha and a beta chain.

Its function is as follows. This protein is one of the two subunits of integration host factor, a specific DNA-binding protein that functions in genetic recombination as well as in transcriptional and translational control. In Rhodopseudomonas palustris (strain BisB18), this protein is Integration host factor subunit beta.